Consider the following 318-residue polypeptide: Mitochondrial coenzyme A transporter SLC25A42 (318 aa).

3 Solcar repeats span residues 31–117 (RQVL…YKRI), 129–214 (LPPW…LKSL), and 224–312 (PYPF…MQIL). 6 helical membrane passes run 33–53 (VLSS…AVAP), 89–109 (LWRG…IQFS), 135–155 (LLAG…LDLV), 186–206 (LYFG…LSFF), 230–250 (MVFG…LDVV), and 293–313 (LKGP…QILL).

This sequence belongs to the mitochondrial carrier (TC 2.A.29) family.

It is found in the mitochondrion inner membrane. It catalyses the reaction ADP(out) + CoA(in) = ADP(in) + CoA(out). It carries out the reaction 3'-dephospho-CoA(in) + ADP(out) = 3'-dephospho-CoA(out) + ADP(in). The enzyme catalyses adenosine 3',5'-bisphosphate(in) + ADP(out) = adenosine 3',5'-bisphosphate(out) + ADP(in). The catalysed reaction is AMP(in) + ADP(out) = AMP(out) + ADP(in). It catalyses the reaction dADP(in) + ADP(out) = dADP(out) + ADP(in). It carries out the reaction ADP(in) + ATP(out) = ADP(out) + ATP(in). Its function is as follows. Mitochondrial carrier mediating the transport of coenzyme A (CoA) in mitochondria in exchange for intramitochondrial (deoxy)adenine nucleotides and adenosine 3',5'-diphosphate. This Mus musculus (Mouse) protein is Mitochondrial coenzyme A transporter SLC25A42 (Slc25a42).